The primary structure comprises 218 residues: Phosphatidylserine decarboxylase proenzyme (218 aa).

The active-site Schiff-base intermediate with substrate; via pyruvic acid is serine 188. The residue at position 188 (serine 188) is a Pyruvic acid (Ser); by autocatalysis.

The protein belongs to the phosphatidylserine decarboxylase family. PSD-A subfamily. Heterodimer of a large membrane-associated beta subunit and a small pyruvoyl-containing alpha subunit. The cofactor is pyruvate. Is synthesized initially as an inactive proenzyme. Formation of the active enzyme involves a self-maturation process in which the active site pyruvoyl group is generated from an internal serine residue via an autocatalytic post-translational modification. Two non-identical subunits are generated from the proenzyme in this reaction, and the pyruvate is formed at the N-terminus of the alpha chain, which is derived from the carboxyl end of the proenzyme. The post-translation cleavage follows an unusual pathway, termed non-hydrolytic serinolysis, in which the side chain hydroxyl group of the serine supplies its oxygen atom to form the C-terminus of the beta chain, while the remainder of the serine residue undergoes an oxidative deamination to produce ammonia and the pyruvoyl prosthetic group on the alpha chain.

Its subcellular location is the cell membrane. The enzyme catalyses a 1,2-diacyl-sn-glycero-3-phospho-L-serine + H(+) = a 1,2-diacyl-sn-glycero-3-phosphoethanolamine + CO2. It participates in phospholipid metabolism; phosphatidylethanolamine biosynthesis; phosphatidylethanolamine from CDP-diacylglycerol: step 2/2. In terms of biological role, catalyzes the formation of phosphatidylethanolamine (PtdEtn) from phosphatidylserine (PtdSer). In Streptomyces coelicolor (strain ATCC BAA-471 / A3(2) / M145), this protein is Phosphatidylserine decarboxylase proenzyme.